We begin with the raw amino-acid sequence, 211 residues long: MIDLHNIRNEYSQQALSEKQCDDDPLKQLEKWLNEAIQAKVNEPTAMNVATVGENGKPSSRVVLLKEVNERGLVFFTNYHSHKGRDLAVNPFAAVNLFWAELQRQVRVEGRVERISPQASDEYFASRPYTSRIGAWASEQSAVISGKNSLLTKAALIAAKHPLQVPRPPHWGGYIVIPELIEFWQGRPSRLHDRIRYRLEKGEWVRERLSP.

Residues 8 to 11 (RNEY) and Lys66 contribute to the substrate site. FMN is bound by residues 61-66 (RVVLLK), 76-77 (FT), Lys83, and Gln105. Positions 123, 127, and 131 each coordinate substrate. Residues 140–141 (QS) and Trp184 each bind FMN. A substrate-binding site is contributed by 190-192 (RLH). Arg194 serves as a coordination point for FMN.

It belongs to the pyridoxamine 5'-phosphate oxidase family. As to quaternary structure, homodimer. It depends on FMN as a cofactor.

It catalyses the reaction pyridoxamine 5'-phosphate + O2 + H2O = pyridoxal 5'-phosphate + H2O2 + NH4(+). It carries out the reaction pyridoxine 5'-phosphate + O2 = pyridoxal 5'-phosphate + H2O2. Its pathway is cofactor metabolism; pyridoxal 5'-phosphate salvage; pyridoxal 5'-phosphate from pyridoxamine 5'-phosphate: step 1/1. It functions in the pathway cofactor metabolism; pyridoxal 5'-phosphate salvage; pyridoxal 5'-phosphate from pyridoxine 5'-phosphate: step 1/1. In terms of biological role, catalyzes the oxidation of either pyridoxine 5'-phosphate (PNP) or pyridoxamine 5'-phosphate (PMP) into pyridoxal 5'-phosphate (PLP). The protein is Pyridoxine/pyridoxamine 5'-phosphate oxidase of Mannheimia succiniciproducens (strain KCTC 0769BP / MBEL55E).